A 304-amino-acid chain; its full sequence is MTDVAEEAGWATAKTLAEALPYIQIYDRETVVIKYGGHAMGQEQVAKLFAADAVLLKLLGVHPVVVHGGGPQISRMLDKAGVKSTFVDGLRVTDEATMEVAEMVLSGAINKEIANWITLAGAEADVRGVGLSGKDARMITAEKVTRTRKDPGSNIEQVVDLGFVGEPTKIDPHIIQALLTSETDYIPVIAPIGVSTEGQTFNINADTVAGALAGALKAKRMLMLTDIAGVLDADGNLIRAMTVAEARALIESGVASGGMIPKLENAIHAVENGVEAVVILDGRRPHAMLVELFSEHGAGTLISK.

Substrate contacts are provided by residues 69 to 70 (GG), Arg91, and Asn202.

The protein belongs to the acetylglutamate kinase family. ArgB subfamily.

Its subcellular location is the cytoplasm. It carries out the reaction N-acetyl-L-glutamate + ATP = N-acetyl-L-glutamyl 5-phosphate + ADP. Its pathway is amino-acid biosynthesis; L-arginine biosynthesis; N(2)-acetyl-L-ornithine from L-glutamate: step 2/4. Functionally, catalyzes the ATP-dependent phosphorylation of N-acetyl-L-glutamate. This Caulobacter sp. (strain K31) protein is Acetylglutamate kinase.